We begin with the raw amino-acid sequence, 502 residues long: MELITLLSALLVLAIVSLSTFFVLYYNTPTKDGKTLPPGRMGWPFIGESYDFFAAGWKGKPESFIFDRLKKFAKGNLNGQFRTSLFGNKSIVVAGAAANKLLFSNEKKLVTMWWPPSIDKAFPSTAQLSANEEALLMRKFFPSFLIRREALQRYIPIMDDCTRRHFATGAWGPSDKIEAFNVTQDYTFWVACRVFMSIDAQEDPETVDSLFRHFNVLKAGIYSMHIDLPWTNFHHAMKASHAIRSAVEQIAKKRRAELAEGKAFPTQDMLSYMLETPITSAEDSKDGKAKYLNDADIGTKILGLLVGGHDTSSTVIAFFFKFMAENPHVYEAIYKEQMEVAATKAPGELLNWDDLQKMKYSWCAICEVMRLTPPVQGAFRQAITDFTHNGYLIPKGWKIYWSTHSTHRNPEIFPQPEKFDPTRFEGNGPPAFSFVPFGGGPRMCPGKEYARLQVLTFVHHIVTKFKWEQILPNEKIIVSPMPYPEKNLPLRMIARSESATLA.

Residues 3-23 (LITLLSALLVLAIVSLSTFFV) traverse the membrane as a helical; Signal-anchor for type II membrane protein segment. N-linked (GlcNAc...) asparagine glycans are attached at residues N88 and N181. Position 444 (C444) interacts with heme.

Belongs to the cytochrome P450 family. The cofactor is heme. In terms of tissue distribution, mainly expressed in flowers and flower buds, to a lesser extent in young leaves and, at low levels, in old leaves, stems and roots.

Its subcellular location is the membrane. The catalysed reaction is beta-amyrin + 3 reduced [NADPH--hemoprotein reductase] + 3 O2 = oleanolate + 3 oxidized [NADPH--hemoprotein reductase] + 4 H2O + 4 H(+). The protein operates within secondary metabolite biosynthesis; terpenoid biosynthesis. Its function is as follows. Component of the oleanane-type triterpene saponins (e.g. saponarioside A and saponarioside B) biosynthetic pathway, leading to the production of natural products with detergent properties used as traditional sources of soap. An oxidoreductase that facilitates the oxidation of the methyl group to a carboxyl group at the C-28 position of beta-amyrin, resulting in the formation of oleanolic acid. Catalyzes also the subsequent oxidation of the methyl group to a&lt; carboxyl group at the C-16 alpha position of oleanolic acid, resulting in the formation of echinocystic acid. The chain is Beta-amyrin 28-monooxygenase CYP716A379 from Saponaria officinalis (Common soapwort).